We begin with the raw amino-acid sequence, 253 residues long: FGFR1 oncogene partner 2 (253 aa).

Positions 5–104 form a coiled coil; that stretch reads IEKALADAKA…SALELIMSKY (100 aa). S141 carries the phosphoserine modification. A coiled-coil region spans residues 160 to 223; the sequence is LERRHLEANQ…LREILQITRE (64 aa). Residues 231–253 form a disordered region; the sequence is DDASESTSLSALVTNSDLSLRKS. Residues 235–253 show a composition bias toward polar residues; the sequence is ESTSLSALVTNSDLSLRKS.

It belongs to the SIKE family. Expressed in bone marrow, spleen and thymus.

It is found in the cytoplasm. In terms of biological role, may be involved in wound healing pathway. This is FGFR1 oncogene partner 2 (FGFR1OP2) from Homo sapiens (Human).